The chain runs to 230 residues: Ribonuclease 3 (230 aa).

The region spanning 5–127 (HEHLARKLGI…ILGAVLRDQG (123 aa)) is the RNase III domain. Residue Glu-40 participates in Mg(2+) binding. Asp-44 is an active-site residue. Residues Asp-113 and Glu-116 each contribute to the Mg(2+) site. Residue Glu-116 is part of the active site. The 71-residue stretch at 154–224 (DPKTRLQELM…AENMLSRLSD (71 aa)) folds into the DRBM domain. The segment at 202 to 230 (GEGSSRKKAEQQAAENMLSRLSDQSRFRV) is disordered.

This sequence belongs to the ribonuclease III family. Homodimer. Mg(2+) is required as a cofactor.

It localises to the cytoplasm. The enzyme catalyses Endonucleolytic cleavage to 5'-phosphomonoester.. Digests double-stranded RNA. Involved in the processing of primary rRNA transcript to yield the immediate precursors to the large and small rRNAs (23S and 16S). Processes some mRNAs, and tRNAs when they are encoded in the rRNA operon. Processes pre-crRNA and tracrRNA of type II CRISPR loci if present in the organism. In Methylococcus capsulatus (strain ATCC 33009 / NCIMB 11132 / Bath), this protein is Ribonuclease 3.